Consider the following 459-residue polypeptide: Bifunctional protein GlmU (459 aa).

The pyrophosphorylase stretch occupies residues 1–230 (MSNRFAVILA…FDETLGVNDR (230 aa)). UDP-N-acetyl-alpha-D-glucosamine contacts are provided by residues 9–12 (LAAG), Lys23, Gln73, and 78–79 (GT). A Mg(2+)-binding site is contributed by Asp103. Positions 140, 155, 170, and 228 each coordinate UDP-N-acetyl-alpha-D-glucosamine. A Mg(2+)-binding site is contributed by Asn228. The tract at residues 231–251 (VALSQAEIIMKNRINRKNMVN) is linker. An N-acetyltransferase region spans residues 252–459 (GVTIIDPSNT…VDQLLNKKKS (208 aa)). 2 residues coordinate UDP-N-acetyl-alpha-D-glucosamine: Arg333 and Lys351. His363 acts as the Proton acceptor in catalysis. Positions 366 and 377 each coordinate UDP-N-acetyl-alpha-D-glucosamine. Residues 386–387 (NY), Ala423, and Arg440 contribute to the acetyl-CoA site.

The protein in the N-terminal section; belongs to the N-acetylglucosamine-1-phosphate uridyltransferase family. It in the C-terminal section; belongs to the transferase hexapeptide repeat family. As to quaternary structure, homotrimer. The cofactor is Mg(2+).

It is found in the cytoplasm. It carries out the reaction alpha-D-glucosamine 1-phosphate + acetyl-CoA = N-acetyl-alpha-D-glucosamine 1-phosphate + CoA + H(+). The catalysed reaction is N-acetyl-alpha-D-glucosamine 1-phosphate + UTP + H(+) = UDP-N-acetyl-alpha-D-glucosamine + diphosphate. It participates in nucleotide-sugar biosynthesis; UDP-N-acetyl-alpha-D-glucosamine biosynthesis; N-acetyl-alpha-D-glucosamine 1-phosphate from alpha-D-glucosamine 6-phosphate (route II): step 2/2. Its pathway is nucleotide-sugar biosynthesis; UDP-N-acetyl-alpha-D-glucosamine biosynthesis; UDP-N-acetyl-alpha-D-glucosamine from N-acetyl-alpha-D-glucosamine 1-phosphate: step 1/1. The protein operates within bacterial outer membrane biogenesis; LPS lipid A biosynthesis. Catalyzes the last two sequential reactions in the de novo biosynthetic pathway for UDP-N-acetylglucosamine (UDP-GlcNAc). The C-terminal domain catalyzes the transfer of acetyl group from acetyl coenzyme A to glucosamine-1-phosphate (GlcN-1-P) to produce N-acetylglucosamine-1-phosphate (GlcNAc-1-P), which is converted into UDP-GlcNAc by the transfer of uridine 5-monophosphate (from uridine 5-triphosphate), a reaction catalyzed by the N-terminal domain. The chain is Bifunctional protein GlmU from Bacillus anthracis (strain A0248).